A 257-amino-acid polypeptide reads, in one-letter code: MAATAGRLFRASLIRHVSAIPWGISASAALRPAASRRMCLTNALWSGSDQAKFAFSTSSSYHAPAVTQHAPYFKGTAVVSGEFKEISLDDFKGKYLVLFFYPLDFTFVCPTEIIAFSDKASEFHDVNCEVVAVSVDSHFSHLAWINTPRKNGGLGHMNIALLSDLTKQISRDYGVLLEGPGLALRGLFIIDPNGVIKHLSVNDLPVGRSVEETLRLVKAFQFVEAHGEVCPANWTPESPTIKPHPTASREYFEKVNQ.

Residues 1-62 constitute a mitochondrion transit peptide; that stretch reads MAATAGRLFR…FAFSTSSSYH (62 aa). The Thioredoxin domain occupies 64–222; the sequence is PAVTQHAPYF…TLRLVKAFQF (159 aa). K84 is subject to N6-succinyllysine. Residue K92 is modified to N6-acetyllysine; alternate. An N6-succinyllysine; alternate modification is found at K92. The active-site Cysteine sulfenic acid (-SOH) intermediate is the C109. Phosphothreonine is present on T147.

This sequence belongs to the peroxiredoxin family. AhpC/Prx1 subfamily. Homodimer; disulfide-linked, upon oxidation. 6 homodimers assemble to form a ring-like dodecamer. Interacts with NEK6. Interacts with LRRK2. Interacts with MAP3K13. Interacts with RPS6KC1 (via PX domain). In terms of processing, phosphorylated by LRRK2; phosphorylation reduces perodixase activity. Post-translationally, the enzyme can be inactivated by further oxidation of the cysteine sulfenic acid (C(P)-SOH) to sulphinic acid (C(P)-SO2H) and sulphonic acid (C(P)-SO3H) instead of its condensation to a disulfide bond. S-palmitoylated. In terms of tissue distribution, predominantly expressed in adrenal cortex. Also detected in liver, renal cortex and medulla, and adrenal medulla (at protein level).

The protein localises to the mitochondrion matrix. It localises to the cytoplasm. It is found in the early endosome. It carries out the reaction a hydroperoxide + [thioredoxin]-dithiol = an alcohol + [thioredoxin]-disulfide + H2O. Functionally, thiol-specific peroxidase that catalyzes the reduction of hydrogen peroxide and organic hydroperoxides to water and alcohols, respectively. Plays a role in cell protection against oxidative stress by detoxifying peroxides. Acts synergistically with MAP3K13 to regulate the activation of NF-kappa-B in the cytosol. Required for the maintenance of physical strength. The polypeptide is Thioredoxin-dependent peroxide reductase, mitochondrial (PRDX3) (Bos taurus (Bovine)).